We begin with the raw amino-acid sequence, 99 residues long: Pyruvate synthase subunit PorD (99 aa).

4Fe-4S ferredoxin-type domains follow at residues 32 to 60 (MRPI…IQEG) and 61 to 91 (GIMK…MRPE). [4Fe-4S] cluster contacts are provided by Cys-41, Cys-44, Cys-47, Cys-51, Cys-71, Cys-74, Cys-77, and Cys-81.

In terms of assembly, heterotetramer of one alpha, one beta, one delta and one gamma chain. [4Fe-4S] cluster is required as a cofactor.

The sequence is that of Pyruvate synthase subunit PorD (porD) from Thermotoga maritima (strain ATCC 43589 / DSM 3109 / JCM 10099 / NBRC 100826 / MSB8).